The sequence spans 219 residues: MNIEELAARIDHTVLGPTTTMDEVTDVLSDAAAYGMNACIPPCYLDAAGDTDMVTDSGVTLVSVIGFPHGQHASIAKRKEAVTAWQAGADEIDVVLNIGRLKTSATETVTHDIAEVVAAVPIPVKVIIETTLLNDDEKRRACKVAVDADADFIKTSTGFANGGATTADVEVLSSYLPVKASGGISSYETAKSMLDAGAERIGASAGVEILEDAPDIYYD.

The active-site Proton donor/acceptor is Asp-93. Residue Lys-154 is the Schiff-base intermediate with acetaldehyde of the active site. Catalysis depends on Lys-179, which acts as the Proton donor/acceptor.

This sequence belongs to the DeoC/FbaB aldolase family. DeoC type 1 subfamily.

Its subcellular location is the cytoplasm. The enzyme catalyses 2-deoxy-D-ribose 5-phosphate = D-glyceraldehyde 3-phosphate + acetaldehyde. It functions in the pathway carbohydrate degradation; 2-deoxy-D-ribose 1-phosphate degradation; D-glyceraldehyde 3-phosphate and acetaldehyde from 2-deoxy-alpha-D-ribose 1-phosphate: step 2/2. In terms of biological role, catalyzes a reversible aldol reaction between acetaldehyde and D-glyceraldehyde 3-phosphate to generate 2-deoxy-D-ribose 5-phosphate. This chain is Deoxyribose-phosphate aldolase, found in Haloquadratum walsbyi (strain DSM 16790 / HBSQ001).